A 119-amino-acid polypeptide reads, in one-letter code: Large ribosomal subunit protein bL20 (119 aa).

The protein belongs to the bacterial ribosomal protein bL20 family.

Binds directly to 23S ribosomal RNA and is necessary for the in vitro assembly process of the 50S ribosomal subunit. It is not involved in the protein synthesizing functions of that subunit. The protein is Large ribosomal subunit protein bL20 of Shewanella amazonensis (strain ATCC BAA-1098 / SB2B).